We begin with the raw amino-acid sequence, 317 residues long: Methionyl-tRNA formyltransferase (317 aa).

110–113 (SLLP) contributes to the (6S)-5,6,7,8-tetrahydrofolate binding site.

The protein belongs to the Fmt family.

It carries out the reaction L-methionyl-tRNA(fMet) + (6R)-10-formyltetrahydrofolate = N-formyl-L-methionyl-tRNA(fMet) + (6S)-5,6,7,8-tetrahydrofolate + H(+). Attaches a formyl group to the free amino group of methionyl-tRNA(fMet). The formyl group appears to play a dual role in the initiator identity of N-formylmethionyl-tRNA by promoting its recognition by IF2 and preventing the misappropriation of this tRNA by the elongation apparatus. This is Methionyl-tRNA formyltransferase from Bacillus pumilus (strain SAFR-032).